The sequence spans 995 residues: Integrator complex subunit 8 (995 aa).

Residue threonine 18 is modified to Phosphothreonine. A WFEF motif motif is present at residues 24-29; it reads WFEFLL. TPR repeat units lie at residues 250–288, 320–356, 570–603, and 833–866; these read CQVCYDLGAAYFQQGSTNSAVYENAREKFFRTKELIAEI, SQQLTPYSQVHICLRSGNYQEVIQIFIEDNLTLSLPV, VYILMAKGLHCSTVKDFSHAKQLFAACLELVTEF, and HSWLIIQADIYFATNQYSAALHYYLQAGAVCSDF.

This sequence belongs to the Integrator subunit 8 family. As to quaternary structure, component of the Integrator complex, composed of core subunits INTS1, INTS2, INTS3, INTS4, INTS5, INTS6, INTS7, INTS8, INTS9/RC74, INTS10, INTS11/CPSF3L, INTS12, INTS13, INTS14 and INTS15. The core complex associates with protein phosphatase 2A subunits PPP2CA and PPP2R1A, to form the Integrator-PP2A (INTAC) complex.

The protein resides in the nucleus. Its subcellular location is the chromosome. Functionally, component of the integrator complex, a multiprotein complex that terminates RNA polymerase II (Pol II) transcription in the promoter-proximal region of genes. The integrator complex provides a quality checkpoint during transcription elongation by driving premature transcription termination of transcripts that are unfavorably configured for transcriptional elongation: the complex terminates transcription by (1) catalyzing dephosphorylation of the C-terminal domain (CTD) of Pol II subunit POLR2A/RPB1 and SUPT5H/SPT5, (2) degrading the exiting nascent RNA transcript via endonuclease activity and (3) promoting the release of Pol II from bound DNA. The integrator complex is also involved in terminating the synthesis of non-coding Pol II transcripts, such as enhancer RNAs (eRNAs), small nuclear RNAs (snRNAs), telomerase RNAs and long non-coding RNAs (lncRNAs). Within the integrator complex, INTS8 is required for the recruitment of protein phosphatase 2A (PP2A) to transcription pause-release checkpoint. The chain is Integrator complex subunit 8 from Homo sapiens (Human).